A 425-amino-acid chain; its full sequence is Glucose-1-phosphate adenylyltransferase (425 aa).

Residues Tyr109, Gly175, 190–191 (EK), and Ser208 contribute to the alpha-D-glucose 1-phosphate site.

Belongs to the bacterial/plant glucose-1-phosphate adenylyltransferase family. Homotetramer.

It carries out the reaction alpha-D-glucose 1-phosphate + ATP + H(+) = ADP-alpha-D-glucose + diphosphate. It functions in the pathway glycan biosynthesis; glycogen biosynthesis. Functionally, involved in the biosynthesis of ADP-glucose, a building block required for the elongation reactions to produce glycogen. Catalyzes the reaction between ATP and alpha-D-glucose 1-phosphate (G1P) to produce pyrophosphate and ADP-Glc. The polypeptide is Glucose-1-phosphate adenylyltransferase (Saccharophagus degradans (strain 2-40 / ATCC 43961 / DSM 17024)).